Consider the following 311-residue polypeptide: tRNA-cytidine(32) 2-sulfurtransferase (311 aa).

A PP-loop motif motif is present at residues 47–52 (SGGKDS). Cys-122, Cys-125, and Cys-213 together coordinate [4Fe-4S] cluster.

This sequence belongs to the TtcA family. As to quaternary structure, homodimer. Requires Mg(2+) as cofactor. The cofactor is [4Fe-4S] cluster.

The protein localises to the cytoplasm. It carries out the reaction cytidine(32) in tRNA + S-sulfanyl-L-cysteinyl-[cysteine desulfurase] + AH2 + ATP = 2-thiocytidine(32) in tRNA + L-cysteinyl-[cysteine desulfurase] + A + AMP + diphosphate + H(+). Its pathway is tRNA modification. Its function is as follows. Catalyzes the ATP-dependent 2-thiolation of cytidine in position 32 of tRNA, to form 2-thiocytidine (s(2)C32). The sulfur atoms are provided by the cysteine/cysteine desulfurase (IscS) system. This chain is tRNA-cytidine(32) 2-sulfurtransferase, found in Escherichia coli O45:K1 (strain S88 / ExPEC).